Here is a 194-residue protein sequence, read N- to C-terminus: Holliday junction branch migration complex subunit RuvA (194 aa).

The tract at residues 1 to 64 (MISRLTGKLV…EDAHLLFGFA (64 aa)) is domain I. Positions 65 to 143 (TAEERKTFRQ…AHTVTDGLFA (79 aa)) are domain II. Residues 144-147 (AAPA) form a flexible linker region. The domain III stretch occupies residues 147 to 194 (AADETEDIVSTLLALGYSEREAKAAVKGVPEGTDVGEGVRLALKNLLK).

It belongs to the RuvA family. In terms of assembly, homotetramer. Forms an RuvA(8)-RuvB(12)-Holliday junction (HJ) complex. HJ DNA is sandwiched between 2 RuvA tetramers; dsDNA enters through RuvA and exits via RuvB. An RuvB hexamer assembles on each DNA strand where it exits the tetramer. Each RuvB hexamer is contacted by two RuvA subunits (via domain III) on 2 adjacent RuvB subunits; this complex drives branch migration. In the full resolvosome a probable DNA-RuvA(4)-RuvB(12)-RuvC(2) complex forms which resolves the HJ.

It localises to the cytoplasm. Its function is as follows. The RuvA-RuvB-RuvC complex processes Holliday junction (HJ) DNA during genetic recombination and DNA repair, while the RuvA-RuvB complex plays an important role in the rescue of blocked DNA replication forks via replication fork reversal (RFR). RuvA specifically binds to HJ cruciform DNA, conferring on it an open structure. The RuvB hexamer acts as an ATP-dependent pump, pulling dsDNA into and through the RuvAB complex. HJ branch migration allows RuvC to scan DNA until it finds its consensus sequence, where it cleaves and resolves the cruciform DNA. The sequence is that of Holliday junction branch migration complex subunit RuvA from Neisseria meningitidis serogroup C (strain 053442).